The following is a 427-amino-acid chain: Protein TIFY 6a (427 aa).

Basic and acidic residues predominate over residues 1–25; that stretch reads MERDFLGAIWRKEEAAGKPEEHSDY. 2 disordered regions span residues 1-32 and 128-154; these read MERD…GGGA and YGVA…HANP. Pro residues predominate over residues 136–146; that stretch reads FPSPSPSPRHP. In terms of domain architecture, Tify spans 196–231; it reads QNPKVTQMTIFYDGLVNVFDNIPVEKAQELMLLASR. The segment at 296–327 is disordered; sequence SFSSSNDSAGPKSGGLPLAVTPLSQASPSQPI. The segment covering 317-327 has biased composition (polar residues); it reads PLSQASPSQPI. Residues 343 to 367 carry the Jas motif; it reads PQARKASLARFLEKRKERVSSVAPY. The Nuclear localization signal motif lies at 345–352; sequence ARKASLAR. The segment at 361–427 is disordered; sequence VSSVAPYPSS…QEPPSTKLQI (67 aa). Composition is skewed to polar residues over residues 369-402 and 411-427; these read SSKS…NNCE and RNIS…KLQI.

This sequence belongs to the TIFY/JAZ family. In terms of assembly, interacts with COI1A. Interacts with COI1A and COI1B in a coronatine-dependent manner. Coronatine is an analog of jasmonoyl isoleucine (JA-Ile). Post-translationally, ubiquitinated. Targeted for degradation by the SCF(COI1) E3 ubiquitin ligase-proteasome pathway during jasmonate signaling.

It is found in the nucleus. Its function is as follows. Repressor of jasmonate responses. This is Protein TIFY 6a from Oryza sativa subsp. japonica (Rice).